We begin with the raw amino-acid sequence, 146 residues long: Cell division protein SepF (146 aa).

This sequence belongs to the SepF family. In terms of assembly, homodimer. Interacts with FtsZ.

Its subcellular location is the cytoplasm. Functionally, cell division protein that is part of the divisome complex and is recruited early to the Z-ring. Probably stimulates Z-ring formation, perhaps through the cross-linking of FtsZ protofilaments. Its function overlaps with FtsA. The sequence is that of Cell division protein SepF from Alkaliphilus oremlandii (strain OhILAs) (Clostridium oremlandii (strain OhILAs)).